The primary structure comprises 179 residues: Large ribosomal subunit protein uL6 (179 aa).

It belongs to the universal ribosomal protein uL6 family. As to quaternary structure, part of the 50S ribosomal subunit.

This protein binds to the 23S rRNA, and is important in its secondary structure. It is located near the subunit interface in the base of the L7/L12 stalk, and near the tRNA binding site of the peptidyltransferase center. The sequence is that of Large ribosomal subunit protein uL6 from Mycobacterium avium (strain 104).